We begin with the raw amino-acid sequence, 165 residues long: Ubiquitin-conjugating enzyme E2 G2 (165 aa).

Ala-2 is modified (N-acetylalanine). The region spanning 4 to 164 (TALKRLMAEY…AKQIVQKSLG (161 aa)) is the UBC core domain. Catalysis depends on Cys-89, which acts as the Glycyl thioester intermediate.

Belongs to the ubiquitin-conjugating enzyme family. In terms of assembly, interacts with AUP1 (via C-terminus); the interaction recruits UBE2G2 to lipid droplets. Interacts with ubiquitin ligases AMFR/gp78 and RNF139/TRC8; recruitment to lipid droplets by AUP1 facilitates interaction of UBE2G2 with AMFR and RNF139, leading to sterol-induced ubiquitination of 3-hydroxy-3-methylglutaryl coenzyme A reductase and its subsequent proteasomal degradation.

Its subcellular location is the endoplasmic reticulum. The protein resides in the lipid droplet. The catalysed reaction is S-ubiquitinyl-[E1 ubiquitin-activating enzyme]-L-cysteine + [E2 ubiquitin-conjugating enzyme]-L-cysteine = [E1 ubiquitin-activating enzyme]-L-cysteine + S-ubiquitinyl-[E2 ubiquitin-conjugating enzyme]-L-cysteine.. It participates in protein modification; protein ubiquitination. Accepts ubiquitin from the E1 complex and catalyzes its covalent attachment to other proteins. In vitro catalyzes 'Lys-48'-linked polyubiquitination. Involved in endoplasmic reticulum-associated degradation (ERAD). Required for sterol-induced ubiquitination of 3-hydroxy-3-methylglutaryl coenzyme A reductase and its subsequent proteasomal degradation. The chain is Ubiquitin-conjugating enzyme E2 G2 from Homo sapiens (Human).